The sequence spans 661 residues: Fructose-1,6-bisphosphatase class 3 (661 aa).

This sequence belongs to the FBPase class 3 family. Mn(2+) is required as a cofactor.

It carries out the reaction beta-D-fructose 1,6-bisphosphate + H2O = beta-D-fructose 6-phosphate + phosphate. Its pathway is carbohydrate biosynthesis; gluconeogenesis. This is Fructose-1,6-bisphosphatase class 3 from Clostridioides difficile (strain 630) (Peptoclostridium difficile).